Consider the following 583-residue polypeptide: 2-succinyl-5-enolpyruvyl-6-hydroxy-3-cyclohexene-1-carboxylate synthase (583 aa).

The protein belongs to the TPP enzyme family. MenD subfamily. Homodimer. It depends on Mg(2+) as a cofactor. The cofactor is Mn(2+). Requires thiamine diphosphate as cofactor.

It carries out the reaction isochorismate + 2-oxoglutarate + H(+) = 5-enolpyruvoyl-6-hydroxy-2-succinyl-cyclohex-3-ene-1-carboxylate + CO2. It functions in the pathway quinol/quinone metabolism; 1,4-dihydroxy-2-naphthoate biosynthesis; 1,4-dihydroxy-2-naphthoate from chorismate: step 2/7. Its pathway is quinol/quinone metabolism; menaquinone biosynthesis. Functionally, catalyzes the thiamine diphosphate-dependent decarboxylation of 2-oxoglutarate and the subsequent addition of the resulting succinic semialdehyde-thiamine pyrophosphate anion to isochorismate to yield 2-succinyl-5-enolpyruvyl-6-hydroxy-3-cyclohexene-1-carboxylate (SEPHCHC). The sequence is that of 2-succinyl-5-enolpyruvyl-6-hydroxy-3-cyclohexene-1-carboxylate synthase from Chlorobium luteolum (strain DSM 273 / BCRC 81028 / 2530) (Pelodictyon luteolum).